We begin with the raw amino-acid sequence, 214 residues long: ER lumen protein-retaining receptor (214 aa).

Over 1-4 (MVFN) the chain is Lumenal. The chain crosses the membrane as a helical span at residues 5-23 (LFRISADLVHLLSIYFLLT). Topologically, residues 24 to 37 (KIISHKNCIGISLR) are cytoplasmic. A helical membrane pass occupies residues 38 to 55 (SQILFFIVWVTRYLDIFY). The Lumenal portion of the chain corresponds to 56 to 63 (NFYSLYNT). The chain crosses the membrane as a helical span at residues 64–82 (ILKIVYLTTSAYTIYLISK). Residues 83-98 (RFRATYDKIHDTLNVW) are Cytoplasmic-facing. Residues 99–112 (YLIVPCIVLAFIFT) traverse the membrane as a helical segment. Topologically, residues 113 to 119 (EDYSITE) are lumenal. Residues 120–139 (ICWTFSIFLEAVAILPQILL) form a helical membrane-spanning segment. At 140-151 (LRSTGEVENLNS) the chain is on the cytoplasmic side. The chain crosses the membrane as a helical span at residues 152 to 170 (QYIFCLGLYRALYIINWIY). The Lumenal portion of the chain corresponds to 171–181 (RYATEQSYWSP). The chain crosses the membrane as a helical span at residues 182–202 (LTWICGSIQTLLYVEYFYYYI). The Cytoplasmic portion of the chain corresponds to 203–214 (KSRVEGTKFVLP).

It belongs to the ERD2 family.

The protein localises to the endoplasmic reticulum membrane. Required for the retention of luminal endoplasmic reticulum proteins. Determines the specificity of the luminal ER protein retention system. Also required for normal vesicular traffic through the Golgi. The sequence is that of ER lumen protein-retaining receptor from Entamoeba histolytica (strain ATCC 30459 / HM-1:IMSS / ABRM).